Reading from the N-terminus, the 463-residue chain is Quinolone resistance protein NorB (463 aa).

A run of 14 helical transmembrane segments spans residues 19–39, 53–73, 86–106, 107–127, 142–162, 165–185, 201–221, 230–250, 273–293, 299–319, 334–354, 357–377, 403–423, and 435–455; these read IVLS…VVLI, IAVS…GGLA, IILN…LLLI, IGRL…LSII, YWSI…GAVA, LGWR…LFLI, FDIK…ILIT, SLLF…FIVL, TASN…NTFV, YSLL…LIMI, PMLI…LTFL, ILYV…LGIY, MASA…YAIV, and IALW…LLLV.

This sequence belongs to the major facilitator superfamily. TCR/Tet family.

Its subcellular location is the cell membrane. Functionally, multidrug efflux pump that acts independently of NorA and is one of the factors that confers resistance against diverse quinolones and chemical compounds. In Staphylococcus aureus (strain bovine RF122 / ET3-1), this protein is Quinolone resistance protein NorB (norB).